Consider the following 172-residue polypeptide: MERAIQGNDAREQANSERWDGGSGGTTSPFKLPDESPSWTEWRLHNDETNSNQDNPLGFKESWGFGKVVFKRYLRYDRTEASLHRVLGSWTGDSVNYAASRFFGFDQIGCTYSIRFRGVSITVSGGSRTLQHLCEMAIRSKQELLQLAPIEVESNVSRGCPEGTETFEKESE.

Over residues 1–20 (MERAIQGNDAREQANSERWD) the composition is skewed to basic and acidic residues. The segment at 1–38 (MERAIQGNDAREQANSERWDGGSGGTTSPFKLPDESPS) is disordered.

Belongs to the tombusviruses protein p19 family. In terms of assembly, homodimer.

Acts as a suppressor of RNA-mediated gene silencing, also known as post-transcriptional gene silencing (PTGS), a mechanism of plant viral defense that limits the accumulation of viral RNAs. Binds to short interfering RNAs (siRNAs) with high affinity. Acts as a molecular caliper to specifically select siRNAs based on the length of the duplex region of the RNA. The protein is RNA silencing suppressor p19 of Capsicum annuum (Capsicum pepper).